The sequence spans 71 residues: Alpha-elapitoxin-Nn3a (71 aa).

5 disulfide bridges follow: Cys3/Cys20, Cys14/Cys42, Cys26/Cys30, Cys46/Cys56, and Cys57/Cys62.

Belongs to the three-finger toxin family. Long-chain subfamily. Type II alpha-neurotoxin sub-subfamily. Expressed by the venom gland.

The protein localises to the secreted. In terms of biological role, nicotinic acetylcholine receptor antagonist. Binds to muscle nicotinic acetylcholine receptor (nAChR) and inhibits acetylcholine from binding to the receptor, thereby impairing neuromuscular transmission. Produces peripheral paralysis by blocking neuromuscular transmission at the postsynaptic site. Induces concentration-dependent inhibition of indirect twitches and abolishes contractile responses of tissues to exogenous acetylcholine and carbachol, in the chick biventer cervicis nerve-muscle preparation at 100-300 nM (in vitro). Prior incubation of tissues with Indian polyvalent antivenom (1 ml/0.6 mg) prevents the neurotoxic effects at 100 nM (in vitro). Addition of Indian polyvalent antivenom (1 ml/0.6 mg) at the t90 time point partially restores the neurotoxic effects (in vitro). Displays a reversible antagonism of concentration-response curves to carbachol, with a pA2 of 8.17 (in vitro). The polypeptide is Alpha-elapitoxin-Nn3a (Naja naja (Indian cobra)).